We begin with the raw amino-acid sequence, 392 residues long: Branched-chain-amino-acid aminotransferase, mitochondrial (392 aa).

A mitochondrion-targeting transit peptide spans 1–27 (MAAAALGQIWARKFLSVPWLLCGPRRY). Y168 contacts substrate. K229 carries the N6-(pyridoxal phosphate)lysine modification. Residue K321 is modified to N6-acetyllysine.

Belongs to the class-IV pyridoxal-phosphate-dependent aminotransferase family. Homodimer. It depends on pyridoxal 5'-phosphate as a cofactor.

The protein localises to the mitochondrion. The enzyme catalyses L-leucine + 2-oxoglutarate = 4-methyl-2-oxopentanoate + L-glutamate. The catalysed reaction is L-isoleucine + 2-oxoglutarate = (S)-3-methyl-2-oxopentanoate + L-glutamate. It catalyses the reaction L-valine + 2-oxoglutarate = 3-methyl-2-oxobutanoate + L-glutamate. In terms of biological role, catalyzes the first reaction in the catabolism of the essential branched chain amino acids leucine, isoleucine, and valine. May also function as a transporter of branched chain alpha-keto acids. The sequence is that of Branched-chain-amino-acid aminotransferase, mitochondrial (BCAT2) from Pongo abelii (Sumatran orangutan).